Consider the following 120-residue polypeptide: C-C motif chemokine 23 (120 aa).

A signal peptide spans 1-21 (MKVSVAALSCLMLVTALGSQA). 3 cysteine pairs are disulfide-bonded: Cys-54/Cys-78, Cys-55/Cys-94, and Cys-65/Cys-105.

This sequence belongs to the intercrine beta (chemokine CC) family. In terms of processing, the N-terminal is proteolytically cleaved by proteases associated with inflammatory responses. The processed forms, CCL23(19-99), CCL23(22-99), CCL23(27-99) and CCL23(30-99) exhibit increase in CCR1-mediated signaling and chemotaxis assays in vitro. High levels in adult lung, liver, skeletal muscle and pancreas. Moderate levels in fetal liver, adult bone marrow and placenta. The short form is the major species and the longer form was detected only in very low abundance. CCL23(19-99), CCL23(22-99), CCL23(27-99), CCL23(30-99) are found in high levels in synovial fluids from rheumatoid patients.

The protein resides in the secreted. Functionally, shows chemotactic activity for monocytes, resting T-lymphocytes, and neutrophils, but not for activated lymphocytes. Inhibits proliferation of myeloid progenitor cells in colony formation assays. This protein can bind heparin. Binds CCR1. CCL23(19-99), CCL23(22-99), CCL23(27-99), CCL23(30-99) are more potent chemoattractants than CCL23. The protein is C-C motif chemokine 23 (CCL23) of Homo sapiens (Human).